The primary structure comprises 99 residues: Putative membrane protein insertion efficiency factor (99 aa).

The protein belongs to the UPF0161 family.

The protein localises to the cell membrane. Its function is as follows. Could be involved in insertion of integral membrane proteins into the membrane. This chain is Putative membrane protein insertion efficiency factor, found in Levilactobacillus brevis (strain ATCC 367 / BCRC 12310 / CIP 105137 / JCM 1170 / LMG 11437 / NCIMB 947 / NCTC 947) (Lactobacillus brevis).